Consider the following 347-residue polypeptide: Protein-arginine kinase (347 aa).

One can recognise a Phosphagen kinase C-terminal domain in the interval 22-247 (LVVSTRIRLA…EQVIQAERHA (226 aa)). ATP is bound by residues 25–29 (STRIR), histidine 85, arginine 118, 169–173 (RASVM), and 200–205 (RGRYGE). The RDXXRA motif of the pArg binding pocket involved in allosteric regulation motif lies at 330-335 (RDRERA).

This sequence belongs to the ATP:guanido phosphotransferase family.

The enzyme catalyses L-arginyl-[protein] + ATP = N(omega)-phospho-L-arginyl-[protein] + ADP + H(+). Appears to be allosterically activated by the binding of pArg-containing polypeptides to the pArg-binding pocket localized in the C-terminal domain of McsB. Catalyzes the specific phosphorylation of arginine residues in proteins. This is Protein-arginine kinase from Exiguobacterium sp. (strain ATCC BAA-1283 / AT1b).